A 601-amino-acid chain; its full sequence is MEGHIHHITPRNITASILQQKVAVQGIITKSSQIRPLLQTAVQFCPLDYSTHARDLSHADVMVKLSSKTPDGKPLELEPGLSTYKDFQTLVVQEMPESAPTGQMPRSVIVILLDQLVDKGKPGDRVIINGTLKALAGPNHSSTFKVVLEAENINTLQSEGPELTEIDKENIKKVMKEENPINLLSKSIAPSIYGHSDVKKAILLMLVGATPKIRLRSRVRGDIHVMLCGDPSTAKSQLLRYVMSIAPLAVSTNGRGATGVGLTAAVVNDPDTNQRTLEAGAMVLADRGIVCVDEFDKMSIEDRAAMHEVMEQQTVTVQKAGIHTALNARCSILAAANPSNGNYDVKKSPMENLYFPESLLSRFDLIFIILDSSTEELDRRLSQHVLKMHRHFDALTEQRGDDEVNVLALVDAEREKIGDAPVYQDTSLYEGEKLFTNKFIKKYVTYARNLPTPSLSESASETIADAYVKLRENERLKRIKHNFKIKTLPITARALDSLIRLAEAHARIRGSDTIDEIDAQVAVQLIFYAHFDENWEGNITTDIARKVREYLTNELIAECKDVIQFDDILSICGIDKPTLMKILPQLSFGYDEDEEFVYKQN.

The MCM domain occupies 180–386 (PINLLSKSIA…LDRRLSQHVL (207 aa)). 229–236 (GDPSTAKS) serves as a coordination point for ATP. The Arginine finger motif lies at 361–364 (SRFD).

Belongs to the MCM family. As to quaternary structure, component of the MCM2-7 complex.

Its subcellular location is the nucleus. The protein resides in the chromosome. It is found in the nucleoplasm. The enzyme catalyses ATP + H2O = ADP + phosphate + H(+). In terms of biological role, acts as a component of the MCM2-7 complex (MCM complex) which is the replicative helicase essential for DNA replication initiation and elongation in eukaryotic cells. Required for DNA replication and cell proliferation. The active ATPase sites in the MCM2-7 ring are formed through the interaction surfaces of two neighboring subunits such that a critical structure of a conserved arginine finger motif is provided in trans relative to the ATP-binding site of the Walker A box of the adjacent subunit. This Entamoeba histolytica (strain ATCC 30459 / HM-1:IMSS / ABRM) protein is DNA replication licensing factor MCM3.